A 176-amino-acid chain; its full sequence is MLRFLNRCSRGRGAWLLLAFTALALELTALYFQHVMLLKPCVLCIYQRSALWGVFAAGIVGAIAPSSLLRYPAIALWIYSSYEGIRLAWKHTDILLNPSPFTTCDFFVSFPSWLPLDKWLPAIFNATGDCSERQWSFLSMEMPQWLLGIFAAYLLIAVLVLIAQPFRSKRRDLFSR.

The Cytoplasmic portion of the chain corresponds to 1 to 14 (MLRFLNRCSRGRGA). The chain crosses the membrane as a helical span at residues 15–31 (WLLLAFTALALELTALY). The Periplasmic segment spans residues 32 to 49 (FQHVMLLKPCVLCIYQRS). Cys-41 and Cys-44 are joined by a disulfide. Residues 50–65 (ALWGVFAAGIVGAIAP) traverse the membrane as a helical segment. Topologically, residues 66–71 (SSLLRY) are cytoplasmic. A helical transmembrane segment spans residues 72–89 (PAIALWIYSSYEGIRLAW). Over 90 to 144 (KHTDILLNPSPFTTCDFFVSFPSWLPLDKWLPAIFNATGDCSERQWSFLSMEMPQ) the chain is Periplasmic. Cys-104 and Cys-130 form a disulfide bridge. Residues 145-163 (WLLGIFAAYLLIAVLVLIA) form a helical membrane-spanning segment. The Cytoplasmic segment spans residues 164–176 (QPFRSKRRDLFSR).

The protein belongs to the DsbB family.

It localises to the cell inner membrane. Functionally, required for disulfide bond formation in some periplasmic proteins. Acts by oxidizing the DsbA protein. The chain is Disulfide bond formation protein B from Pectobacterium atrosepticum (strain SCRI 1043 / ATCC BAA-672) (Erwinia carotovora subsp. atroseptica).